The chain runs to 257 residues: Transcription factor LBX2 (257 aa).

A disordered region spans residues 1–43 (MTSSSKDMKAGSVLQSSGEERRRGPLDQLPPPANSNKPLTPFS). Positions 1–46 (MTSSSKDMKAGSVLQSSGEERRRGPLDQLPPPANSNKPLTPFSIED) are required for convergent extension movement and hypaxial myogenesis during gastrulation. Required for the formation of thick and thin myofilaments. Required for myod1 expression in the pectoral fin bud. Required for continuous expression of cxcl12a in the posterior lateral mesoderm at the tail bud stage and in adaxial cells at the 10-somite stage. The segment at residues 126–185 (RRKSRTAFTNHQIYELEKRFLYQKYLSPADRDQIAQQLGLTNAQVITWFQNRRAKLKRDL) is a DNA-binding region (homeobox). The tract at residues 206–257 (LVSMEDMEDAHGGSGPISPSLSPRAFPQSPSSSRGQTTDEFSEEDEEIEVDD) is disordered. The span at 233–243 (QSPSSSRGQTT) shows a compositional bias: polar residues. Acidic residues predominate over residues 245 to 257 (EFSEEDEEIEVDD).

Interacts (via N-terminus) with tle3a/gro2 (via C-terminus).

It is found in the nucleus. Functionally, transcription factor required in several developmental processes. Involved in axis formation during embryonic development by inhibiting tle3a/gro2 from binding to tcf7l1a, thereby facilitating ctnnb1-mediated transcription of canonical Wnt/CTNNB1 signaling target genes. Regulates convergent extension movements and hypaxial myogenesis during gastrulation by activating non-canonical Wnt signaling via wnt5b. Required for the formation of myofibrils and fusion of fast muscle precursor cells, potentially via transcriptional regulation of genes specific to thick and thin myofilaments. Regulates the migration of the posterior lateral line primordium during embryonic development, possibly via regulation of cxcl12a/sdf1a expression in the posterior lateral mesoderm, thereby modulating the deposition of neuromasts at correct intervals. This is Transcription factor LBX2 from Danio rerio (Zebrafish).